Consider the following 705-residue polypeptide: Polyribonucleotide nucleotidyltransferase (705 aa).

D485 and D491 together coordinate Mg(2+). One can recognise a KH domain in the interval 552–611; the sequence is PRVYTMTIAPEKIRDVIGAGGKTINKIIGETGVQIDIKEDGKIYVMSSDSVGANRALKMI. The region spanning 621–689 is the S1 motif domain; sequence GEIYLGKVTR…DQGRINLSRR (69 aa).

The protein belongs to the polyribonucleotide nucleotidyltransferase family. Mg(2+) is required as a cofactor.

The protein resides in the cytoplasm. It carries out the reaction RNA(n+1) + phosphate = RNA(n) + a ribonucleoside 5'-diphosphate. Involved in mRNA degradation. Catalyzes the phosphorolysis of single-stranded polyribonucleotides processively in the 3'- to 5'-direction. In Clostridium tetani (strain Massachusetts / E88), this protein is Polyribonucleotide nucleotidyltransferase.